Consider the following 565-residue polypeptide: Nephrocystin-1 (565 aa).

Over residues 1–32 the composition is skewed to acidic residues; it reads GEEEDEEEEEEEESEEGGGEEEESEEEEEEKQ. Disordered stretches follow at residues 1–46 and 95–132; these read GEEE…KEYI and VEPYNKEEGQDTSEEEDSEEDVEVGDQTAGGEEVKQRT. Positions 2–48 form a coiled coil; the sequence is EEEDEEEEEEEESEEGGGEEEESEEEEEEKQENESHHQATSKEYIAV. Ser-14 is modified (phosphoserine). Positions 40-100 constitute an SH3 domain; it reads ATSKEYIAVG…PRTYVEPYNK (61 aa). The segment covering 104–118 has biased composition (acidic residues); the sequence is QDTSEEEDSEEDVEV. Tyr-182 carries the post-translational modification Phosphotyrosine; by FAK2. A Phosphotyrosine; by SRC modification is found at Tyr-554.

It belongs to the nephrocystin-1 family. In terms of assembly, interacts with Crk-associated substrate BCAR1, NPHP4, PTK2B/PYK2 and tensin. Interacts with INVS and NPHP3. Interacts with AHI1 and TNK2. Interacts with NPHP4 in a complex containing NPHP1, NPHP4 and RPGRIP1L/NPHP8. Interacts with IQCB1; the interaction likely requires additional interactors. Interacts with KIF7. Interacts with ANKS3. Interacts with SPATA7. Interacts with FLNA. As to expression, expressed in renal cells (at protein level).

It localises to the cell junction. It is found in the adherens junction. The protein resides in the cell projection. Its subcellular location is the cilium. The protein localises to the cytoplasm. It localises to the cytoskeleton. It is found in the cilium axoneme. The protein resides in the tight junction. Its function is as follows. Together with BCAR1 it may play a role in the control of epithelial cell polarity. Involved in the organization of apical junctions in kidney cells together with NPHP4 and RPGRIP1L/NPHP8. Does not seem to be strictly required for ciliogenesis. Seems to help to recruit PTK2B/PYK2 to cell matrix adhesions, thereby initiating phosphorylation of PTK2B/PYK2 and PTK2B/PYK2-dependent signaling. May play a role in the regulation of intraflagellar transport (IFT) during cilia assembly. Required for normal retina development. In connecting photoreceptor cilia influences the movement of some IFT proteins such as IFT88 and WDR19. Involved in spermatogenesis. This chain is Nephrocystin-1 (NPHP1), found in Canis lupus familiaris (Dog).